Here is a 1003-residue protein sequence, read N- to C-terminus: Translation initiation factor IF-2 (1003 aa).

Composition is skewed to basic and acidic residues over residues 61–74 (EKFS…DRNK), 139–169 (PVVE…KKPE), 180–206 (LEEK…KETP), 219–229 (VFKIRPTEFKS), and 252–290 (SKEE…DKIS). Disordered regions lie at residues 61–81 (EKFS…SIEG) and 135–362 (PKAE…KDRF). Residues 315-350 (NAAGTTNAGGASNNNQRNDNANRPNRNNNSKPNGNN) are compositionally biased toward low complexity. The region spanning 502–672 (PRAPIVTVMG…LLEAEMLDLK (171 aa)) is the tr-type G domain. Residues 511–518 (GHVDHGKT) form a G1 region. GTP is bound at residue 511–518 (GHVDHGKT). Residues 536-540 (GITQH) form a G2 region. A G3 region spans residues 558 to 561 (DTPG). GTP contacts are provided by residues 558 to 562 (DTPGH) and 612 to 615 (NKVD). The G4 stretch occupies residues 612–615 (NKVD). Positions 648–650 (SAK) are G5.

The protein belongs to the TRAFAC class translation factor GTPase superfamily. Classic translation factor GTPase family. IF-2 subfamily.

The protein resides in the cytoplasm. Functionally, one of the essential components for the initiation of protein synthesis. Protects formylmethionyl-tRNA from spontaneous hydrolysis and promotes its binding to the 30S ribosomal subunits. Also involved in the hydrolysis of GTP during the formation of the 70S ribosomal complex. The protein is Translation initiation factor IF-2 of Phocaeicola vulgatus (strain ATCC 8482 / DSM 1447 / JCM 5826 / CCUG 4940 / NBRC 14291 / NCTC 11154) (Bacteroides vulgatus).